Consider the following 581-residue polypeptide: Arginine--tRNA ligase (581 aa).

The 'HIGH' region signature appears at 126–136 (PNLAKEMHVGH).

It belongs to the class-I aminoacyl-tRNA synthetase family. As to quaternary structure, monomer.

It localises to the cytoplasm. The enzyme catalyses tRNA(Arg) + L-arginine + ATP = L-arginyl-tRNA(Arg) + AMP + diphosphate. This Shewanella putrefaciens (strain CN-32 / ATCC BAA-453) protein is Arginine--tRNA ligase.